The following is a 144-amino-acid chain: Deoxyuridine 5'-triphosphate nucleotidohydrolase (144 aa).

Substrate is bound by residues 63 to 65, Asn76, 80 to 82, and Lys90; these read RSG and TID.

This sequence belongs to the dUTPase family. It depends on Mg(2+) as a cofactor.

The catalysed reaction is dUTP + H2O = dUMP + diphosphate + H(+). It participates in pyrimidine metabolism; dUMP biosynthesis; dUMP from dCTP (dUTP route): step 2/2. This enzyme is involved in nucleotide metabolism: it produces dUMP, the immediate precursor of thymidine nucleotides and it decreases the intracellular concentration of dUTP so that uracil cannot be incorporated into DNA. The protein is Deoxyuridine 5'-triphosphate nucleotidohydrolase of Hydrogenobaculum sp. (strain Y04AAS1).